Reading from the N-terminus, the 191-residue chain is Protein GrpE (191 aa).

The segment covering 1–19 has biased composition (basic and acidic residues); that stretch reads MKDEHNQKHDHLSQKEPES. The segment at 1-44 is disordered; it reads MKDEHNQKHDHLSQKEPESYQKACACKEQQDEEMQEAGEKEGEI.

This sequence belongs to the GrpE family. Homodimer.

The protein localises to the cytoplasm. In terms of biological role, participates actively in the response to hyperosmotic and heat shock by preventing the aggregation of stress-denatured proteins, in association with DnaK and GrpE. It is the nucleotide exchange factor for DnaK and may function as a thermosensor. Unfolded proteins bind initially to DnaJ; upon interaction with the DnaJ-bound protein, DnaK hydrolyzes its bound ATP, resulting in the formation of a stable complex. GrpE releases ADP from DnaK; ATP binding to DnaK triggers the release of the substrate protein, thus completing the reaction cycle. Several rounds of ATP-dependent interactions between DnaJ, DnaK and GrpE are required for fully efficient folding. This is Protein GrpE from Helicobacter pylori (strain G27).